The chain runs to 595 residues: Coagulation factor XII (595 aa).

Positions 1 to 19 are cleaved as a signal peptide; sequence MTALLFLGSLLMSLDLTLS. The Fibronectin type-II domain occupies 41-89; the sequence is VDGKLCHFPFQYHRRLYHKCIHKGQPGSRPWCATTPNFDEDQQWGYCLE. Intrachain disulfides connect cysteine 46–cysteine 72, cysteine 60–cysteine 87, cysteine 97–cysteine 109, cysteine 103–cysteine 118, cysteine 120–cysteine 129, cysteine 134–cysteine 162, cysteine 160–cysteine 169, cysteine 177–cysteine 188, cysteine 182–cysteine 197, cysteine 199–cysteine 208, cysteine 216–cysteine 294, cysteine 237–cysteine 276, and cysteine 265–cysteine 289. In terms of domain architecture, EGF-like 1 spans 93-130; it reads VKDHCSKHSPCHKGGTCVNTPNGPHCLCPEHLTGKHCQ. Residue threonine 108 is glycosylated (O-linked (Fuc) threonine). One can recognise a Fibronectin type-I domain in the interval 132–172; the sequence is EKCFESQLLKFFHENEIWFRTGPGGVARCQCKGPQAVCKLL. The 37-residue stretch at 173-209 folds into the EGF-like 2 domain; sequence TSQVCRVNPCLNGGTCLLVEDHRLCHCPAGYAGPFCD. In terms of domain architecture, Kringle spans 215–294; that stretch reads TCYEDRGLSY…SWDYCDLEQC (80 aa). N-linked (GlcNAc...) asparagine glycosylation is present at asparagine 248. Threonine 298 is a glycosylation site (O-linked (GalNAc...) threonine). Residues 302–332 are disordered; sequence PVSPESHDMLKPRPPILQSSPRDSTRNQNVV. An O-linked (GalNAc...) serine glycan is attached at serine 307. The span at 318 to 332 shows a compositional bias: polar residues; that stretch reads LQSSPRDSTRNQNVV. The O-linked (GalNAc...) threonine glycan is linked to threonine 326. 7 disulfide bridges follow: cysteine 340-cysteine 466, cysteine 378-cysteine 394, cysteine 386-cysteine 455, cysteine 417-cysteine 420, cysteine 480-cysteine 549, cysteine 512-cysteine 528, and cysteine 539-cysteine 570. The 241-residue stretch at 354 to 594 folds into the Peptidase S1 domain; it reads VVGGLVALPG…YLDWIQEHTA (241 aa). Histidine 393 serves as the catalytic Charge relay system. Asparagine 414 carries N-linked (GlcNAc...) asparagine glycosylation. Aspartate 442 acts as the Charge relay system in catalysis. Serine 543 (charge relay system) is an active-site residue.

This sequence belongs to the peptidase S1 family. As to quaternary structure, interacts with HRG; the interaction, which is enhanced in the presence of zinc ions and inhibited by heparin-binding, inhibits factor XII autoactivation and contact-initiated coagulation. In terms of processing, O- and N-glycosylated.

The protein resides in the secreted. It carries out the reaction Selective cleavage of Arg-|-Ile bonds in factor VII to form factor VIIa and factor XI to form factor XIa.. Its activity is regulated as follows. Activity is promoted in the presence of negatively charged surfaces. Its function is as follows. Factor XII is a serum glycoprotein that participates in the initiation of blood coagulation, fibrinolysis, and the generation of bradykinin and angiotensin. Prekallikrein is cleaved by factor XII to form kallikrein, which then cleaves factor XII first to alpha-factor XIIa and then trypsin cleaves it to beta-factor XIIa. Alpha-factor XIIa activates factor XI to factor XIa. The chain is Coagulation factor XII (F12) from Rattus norvegicus (Rat).